Here is a 197-residue protein sequence, read N- to C-terminus: Small ribosomal subunit protein uS4y (197 aa).

The S4 RNA-binding domain maps to 109 to 183 (RRLQTIVFKS…VKRRNERAGA (75 aa)). The disordered stretch occupies residues 161-197 (SLTSPFGGGRPGRVKRRNERAGAKKASGGDGDEDDEE).

It belongs to the universal ribosomal protein uS4 family. Binds to the translation initiation factors TIF3E1.

The polypeptide is Small ribosomal subunit protein uS4y (RPS9C) (Arabidopsis thaliana (Mouse-ear cress)).